We begin with the raw amino-acid sequence, 307 residues long: Probable aspartoacylase (307 aa).

Residues H13 and E16 each contribute to the Zn(2+) site. Substrate-binding positions include R55 and 62–63 (NR). A Zn(2+)-binding site is contributed by H105. Residues E163 and Y276 each contribute to the substrate site.

The protein belongs to the AspA/AstE family. Aspartoacylase subfamily. Zn(2+) serves as cofactor.

It catalyses the reaction an N-acyl-L-aspartate + H2O = a carboxylate + L-aspartate. This Prochlorococcus marinus (strain SARG / CCMP1375 / SS120) protein is Probable aspartoacylase.